The sequence spans 312 residues: Phosphoribosylaminoimidazole-succinocarboxamide synthase (312 aa).

The protein belongs to the SAICAR synthetase family.

It carries out the reaction 5-amino-1-(5-phospho-D-ribosyl)imidazole-4-carboxylate + L-aspartate + ATP = (2S)-2-[5-amino-1-(5-phospho-beta-D-ribosyl)imidazole-4-carboxamido]succinate + ADP + phosphate + 2 H(+). It functions in the pathway purine metabolism; IMP biosynthesis via de novo pathway; 5-amino-1-(5-phospho-D-ribosyl)imidazole-4-carboxamide from 5-amino-1-(5-phospho-D-ribosyl)imidazole-4-carboxylate: step 1/2. This chain is Phosphoribosylaminoimidazole-succinocarboxamide synthase, found in Legionella pneumophila (strain Lens).